Reading from the N-terminus, the 420-residue chain is Zinc finger protein 362 (420 aa).

Disordered regions lie at residues 1-28 (MSRSSPSGKGHSRMAEPRFNNPYFWPPP), 54-80 (RPPHLPPTSASSQQPLLVPPAPAESSQ), and 115-155 (VTGL…SQSR). The span at 121–154 (STRTPSVSTSESSAGAGTGTGTSTPSTPTTTSQS) shows a compositional bias: low complexity. At Thr-162 the chain carries Phosphothreonine. Residues 178–202 (TIQGHGLLGPPKSERGRKKIKAENP) are disordered. Lys-198 participates in a covalent cross-link: Glycyl lysine isopeptide (Lys-Gly) (interchain with G-Cter in SUMO2). 6 C2H2-type zinc fingers span residues 227–249 (YRCKVCPLTFFTKSEMQIHSKSH), 255–277 (HKCPHCSKSFANASYLAQHLRIH), 283–305 (YHCSYCDKSFRQLSHLQQHTRIH), 311–335 (YKCPHPGCEKAFTQLSNLQSHQRQH), 341–363 (YKCPNCYRAYSDSASLQIHLSAH), and 371–393 (YCCSMCGRAYTSETYLMKHMSKH). Ser-404 is modified (phosphoserine).

It belongs to the krueppel C2H2-type zinc-finger protein family.

The protein localises to the nucleus. May be involved in transcriptional regulation. The polypeptide is Zinc finger protein 362 (ZNF362) (Homo sapiens (Human)).